Consider the following 1078-residue polypeptide: mRNA 3'-end-processing protein rna14 (1078 aa).

Disordered stretches follow at residues 15-209 (AMNA…DTPA) and 222-251 (QSENMQDSAAATPVPDSPSTSKGRLPHDRV). A compositionally biased stretch (polar residues) spans 42 to 55 (KTLQDQYSASILDS). The segment covering 58–68 (SEIAPSSASPS) has biased composition (low complexity). The segment covering 82-115 (DPSQPADSAYPSQTPSRADSQASVSAPASGTSVP) has biased composition (polar residues). The segment covering 126–139 (VEDEDEDDAGDADY) has biased composition (acidic residues). Polar residues-rich tracts occupy residues 151–170 (NTISMNVPQQPISGNANEDT) and 190–206 (FPNSSYTPASAAASKSD). 6 HAT repeats span residues 280 to 312 (NRIDSAREVYERFLTAFPFSAEQWVAYATMESE), 314 to 345 (NELYRLEQIFNRTLLTIPDVQLWTVYLDYVRR), 356 to 391 (QSRRIISSAYDLALQYVGVDKDSGSIWTDYVQFIRS), 405 to 438 (QKMDLLRKAYQKAICVPTQAVNNLWKEYDQFEMG), 475 to 508 (TTLPRLPPVLGSDGDIEFGQQVDIWKRWIKWEKG), and 520 to 552 (AFKARVIYVYKQALMALRFLPEIWFEAAEFCFL). Disordered stretches follow at residues 632–663 (ETFAKINPDTQPSKTDDDDDDQSDSKARESMK) and 851–950 (PTVV…QGSP). Residues 879 to 894 (GTPSSRYPDASVTNSP) are compositionally biased toward polar residues. The span at 896-907 (RPLEDFDDEMNR) shows a compositional bias: basic and acidic residues. Residues 931–949 (RTQQVISNQTGSQFRSQGS) show a composition bias toward polar residues.

Its subcellular location is the nucleus. It is found in the cytoplasm. Functionally, component of the cleavage factor IA (CFIA) complex, which is involved in the endonucleolytic cleavage during polyadenylation-dependent pre-mRNA 3'-end formation. The protein is mRNA 3'-end-processing protein rna14 (rna14) of Aspergillus oryzae (strain ATCC 42149 / RIB 40) (Yellow koji mold).